We begin with the raw amino-acid sequence, 288 residues long: Polyamine aminopropyltransferase (288 aa).

One can recognise a PABS domain in the interval 9–242 (SGWLDEYHQG…GLWSWAFASM (234 aa)). Q36 contacts S-methyl-5'-thioadenosine. Residues H67 and D91 each coordinate spermidine. S-methyl-5'-thioadenosine contacts are provided by residues E111 and 143–144 (NG). D162 functions as the Proton acceptor in the catalytic mechanism. Position 169 (P169) interacts with S-methyl-5'-thioadenosine.

It belongs to the spermidine/spermine synthase family. In terms of assembly, homodimer or homotetramer.

The protein localises to the cytoplasm. The catalysed reaction is S-adenosyl 3-(methylsulfanyl)propylamine + putrescine = S-methyl-5'-thioadenosine + spermidine + H(+). The protein operates within amine and polyamine biosynthesis; spermidine biosynthesis; spermidine from putrescine: step 1/1. Catalyzes the irreversible transfer of a propylamine group from the amino donor S-adenosylmethioninamine (decarboxy-AdoMet) to putrescine (1,4-diaminobutane) to yield spermidine. The chain is Polyamine aminopropyltransferase from Prochlorococcus marinus (strain NATL1A).